Reading from the N-terminus, the 132-residue chain is Small ribosomal subunit protein uS13 (132 aa).

A compositionally biased stretch (basic residues) spans 101–125; the sequence is RGLPVRGQRTKTNARTRKGPRKTVA. Residues 101–132 are disordered; it reads RGLPVRGQRTKTNARTRKGPRKTVANKKIETR.

This sequence belongs to the universal ribosomal protein uS13 family. In terms of assembly, part of the 30S ribosomal subunit. Forms a loose heterodimer with protein S19. Forms two bridges to the 50S subunit in the 70S ribosome.

Functionally, located at the top of the head of the 30S subunit, it contacts several helices of the 16S rRNA. In the 70S ribosome it contacts the 23S rRNA (bridge B1a) and protein L5 of the 50S subunit (bridge B1b), connecting the 2 subunits; these bridges are implicated in subunit movement. Contacts the tRNAs in the A and P-sites. The chain is Small ribosomal subunit protein uS13 from Ureaplasma parvum serovar 3 (strain ATCC 27815 / 27 / NCTC 11736).